The sequence spans 191 residues: Pyridoxal 5'-phosphate synthase subunit PdxT (191 aa).

L-glutamine is bound at residue G48 to S50. C81 serves as the catalytic Nucleophile. L-glutamine is bound by residues R109 and I136 to R137. Residues H172 and E174 each act as charge relay system in the active site.

This sequence belongs to the glutaminase PdxT/SNO family. In the presence of PdxS, forms a dodecamer of heterodimers. Only shows activity in the heterodimer.

It carries out the reaction aldehydo-D-ribose 5-phosphate + D-glyceraldehyde 3-phosphate + L-glutamine = pyridoxal 5'-phosphate + L-glutamate + phosphate + 3 H2O + H(+). The catalysed reaction is L-glutamine + H2O = L-glutamate + NH4(+). It functions in the pathway cofactor biosynthesis; pyridoxal 5'-phosphate biosynthesis. Functionally, catalyzes the hydrolysis of glutamine to glutamate and ammonia as part of the biosynthesis of pyridoxal 5'-phosphate. The resulting ammonia molecule is channeled to the active site of PdxS. In Thermus thermophilus (strain ATCC 27634 / DSM 579 / HB8), this protein is Pyridoxal 5'-phosphate synthase subunit PdxT.